The primary structure comprises 317 residues: Ribose-phosphate pyrophosphokinase (317 aa).

ATP contacts are provided by residues 41–43 (DME) and 100–101 (RQ). Positions 134 and 174 each coordinate Mg(2+). The active site involves Lys197. D-ribose 5-phosphate is bound by residues Arg199, Asp223, and 227-231 (DSGGT).

The protein belongs to the ribose-phosphate pyrophosphokinase family. Class I subfamily. Homohexamer. Requires Mg(2+) as cofactor.

The protein localises to the cytoplasm. It carries out the reaction D-ribose 5-phosphate + ATP = 5-phospho-alpha-D-ribose 1-diphosphate + AMP + H(+). It functions in the pathway metabolic intermediate biosynthesis; 5-phospho-alpha-D-ribose 1-diphosphate biosynthesis; 5-phospho-alpha-D-ribose 1-diphosphate from D-ribose 5-phosphate (route I): step 1/1. Its function is as follows. Involved in the biosynthesis of the central metabolite phospho-alpha-D-ribosyl-1-pyrophosphate (PRPP) via the transfer of pyrophosphoryl group from ATP to 1-hydroxyl of ribose-5-phosphate (Rib-5-P). This Bradyrhizobium diazoefficiens (strain JCM 10833 / BCRC 13528 / IAM 13628 / NBRC 14792 / USDA 110) protein is Ribose-phosphate pyrophosphokinase.